The sequence spans 371 residues: Galanin receptor type 2 (371 aa).

Over 1–27 (MNGSDSQGAEDSSQEGGGGWQPEAVLV) the chain is Extracellular. N-linked (GlcNAc...) asparagine glycosylation is present at asparagine 2. The chain crosses the membrane as a helical span at residues 28–48 (PLFFALIFLVGAVGNALVLAV). The Cytoplasmic portion of the chain corresponds to 49–59 (LLRGGQAVSTT). The helical transmembrane segment at 60 to 80 (NLFILNLGVADLCFILCCVPF) threads the bilayer. At 81–98 (QATIYTLDDWVFGSLLCK) the chain is on the extracellular side. An intrachain disulfide couples cysteine 97 to cysteine 174. The helical transmembrane segment at 99–120 (AVHFLIFLTMHASSFTLAAVSL) threads the bilayer. Over 121–140 (DRYLAIRYPLHSRELRTPRN) the chain is Cytoplasmic. Residues 141–161 (ALAAIGLIWGLALLFSGPYLS) form a helical membrane-spanning segment. At 162–186 (YYSQSQLANLTVCHPAWSAPRRRAM) the chain is on the extracellular side. The chain crosses the membrane as a helical span at residues 187 to 207 (DLCTFVFSYLLPVLVLSLTYA). Residues 208–236 (RTLHYLWRTVDPVAAGSGSQRAKRKVTRM) lie on the Cytoplasmic side of the membrane. The helical transmembrane segment at 237–257 (IVIVAVLFCLCWMPHHALILC) threads the bilayer. Residues 258–259 (VW) lie on the Extracellular side of the membrane. The helical transmembrane segment at 260–280 (FGRFPLTRATYALRILSHLVS) threads the bilayer. Residues 281–371 (YANSCVNPIV…TLSRTLDPAC (91 aa)) lie on the Cytoplasmic side of the membrane.

It belongs to the G-protein coupled receptor 1 family.

Its subcellular location is the cell membrane. In terms of biological role, receptor for the hormone galanin, GALP and spexin-1. The activity of this receptor is mediated by G proteins that activate the phospholipase C/protein kinase C pathway (via G(q)) and that inhibit adenylyl cyclase (via G(i)). The chain is Galanin receptor type 2 (Galr2) from Mus musculus (Mouse).